We begin with the raw amino-acid sequence, 77 residues long: U8-hexatoxin-Mg1a (77 aa).

A signal peptide spans 1–22; it reads MKVFSFTIGLVVIISLFAFALA. The propeptide occupies 23–43; the sequence is YDEETDLMKKLVEMERAIEQR. 3 disulfide bridges follow: cysteine 46-cysteine 60, cysteine 53-cysteine 65, and cysteine 59-cysteine 76.

As to expression, expressed by the venom gland.

The protein localises to the secreted. Functionally, intrathorax injection into crickets causes paralysis prolonged for more than 60 minutes, followed by recovery. The protein is U8-hexatoxin-Mg1a of Macrothele gigas (Japanese funnel web spider).